The following is a 423-amino-acid chain: Protein FAM43A (423 aa).

Residues E263–E283 are compositionally biased toward acidic residues. Disordered stretches follow at residues E263–A298, R321–G344, and L382–G423. Residues E323 to G335 show a composition bias toward gly residues. Residues S383–I393 show a composition bias toward low complexity. Polar residues predominate over residues T401 to Q411.

Belongs to the FAM43 family.

This chain is Protein FAM43A (FAM43A), found in Homo sapiens (Human).